Here is an 879-residue protein sequence, read N- to C-terminus: Beta-mannosidase (879 aa).

Positions 1-17 are cleaved as a signal peptide; sequence MLLRLLLLLAPCGAGFA. N35 and N77 each carry an N-linked (GlcNAc...) asparagine glycan. C167 and C176 are joined by a disulfide. 190-192 is a binding site for substrate; it reads WDW. N-linked (GlcNAc...) asparagine glycosylation is found at N297 and N302. N456 contacts substrate. Residue E457 is the Proton donor of the active site. Cystine bridges form between C540/C629, C732/C761, and C764/C769. E554 serves as the catalytic Nucleophile. N-linked (GlcNAc...) asparagine glycosylation occurs at N607. The N-linked (GlcNAc...) asparagine glycan is linked to N803.

It belongs to the glycosyl hydrolase 2 family. Monomer. In terms of processing, the N-terminus is blocked. Post-translationally, N-glycosylated. Detected in kidney (at protein level). Highest expression is found in thyroid tissue. The amount of transcript is significantly higher in normal tissues than in tissues affected by the disease.

It is found in the lysosome. The enzyme catalyses Hydrolysis of terminal, non-reducing beta-D-mannose residues in beta-D-mannosides.. The protein operates within glycan metabolism; N-glycan degradation. In terms of biological role, exoglycosidase that cleaves the single beta-linked mannose residue from the non-reducing end of all N-linked glycoprotein oligosaccharides. The polypeptide is Beta-mannosidase (MANBA) (Bos taurus (Bovine)).